The primary structure comprises 446 residues: MRYRSMTVTLQPADLLARLQSRHPLLWLNPHAGSPLPHDAPGPGAIATAEARLARCEPLMAELFPELATSAGKIESPLMPADNLQRTLSLPADTHGAWFIKRDDALPIAGSIKARGGFHEVLALAESIAIEHGLLEPAGDRRILASAAARERFAAHTVIVGSTGNLGLSIGVMASALGFESVVHMSTDAKPWKKARLRQRGVRVIEHDGDYAQAVAAGRAQARNQPRSHFVDDEGSLMLFLGYAASARHLAAQLAEAGRRVDATHPLFVHIPCGVGGAPGGIAHGLKALFGEHVHCFFAEPVASPCMLVQLAAGLGKPVSVYDVGLDNRTEADGLAVAQASHLVSPLMASLLSGVFTVSDAQLYAQLLAVQHATGVELEPSAAAAVGGPGWLTRSPAGRDYVHRHAIDLRQSTHVIWATGGSLVPPEEHRRFQSHAKALAGAAAGT.

At K113 the chain carries N6-(pyridoxal phosphate)lysine.

This sequence belongs to the serine/threonine dehydratase family. DsdA subfamily. The cofactor is pyridoxal 5'-phosphate.

The enzyme catalyses D-serine = pyruvate + NH4(+). This chain is Probable D-serine dehydratase, found in Burkholderia lata (strain ATCC 17760 / DSM 23089 / LMG 22485 / NCIMB 9086 / R18194 / 383).